We begin with the raw amino-acid sequence, 119 residues long: Acidic phospholipase A2 E (119 aa).

Intrachain disulfides connect C11–C71, C26–C118, C28–C44, C43–C99, C50–C92, C60–C85, and C78–C90. Residues Y27, G29, and G31 each contribute to the Ca(2+) site. Residue H47 is part of the active site. D48 provides a ligand contact to Ca(2+). Residue D93 is part of the active site.

The protein belongs to the phospholipase A2 family. Group I subfamily. D49 sub-subfamily. Requires Ca(2+) as cofactor. Expressed by the venom gland.

Its subcellular location is the secreted. It catalyses the reaction a 1,2-diacyl-sn-glycero-3-phosphocholine + H2O = a 1-acyl-sn-glycero-3-phosphocholine + a fatty acid + H(+). Its function is as follows. PLA2 catalyzes the calcium-dependent hydrolysis of the 2-acyl groups in 3-sn-phosphoglycerides. This is Acidic phospholipase A2 E from Naja oxiana (Central Asian cobra).